A 572-amino-acid polypeptide reads, in one-letter code: Myb-like protein Y (572 aa).

The span at 196–211 (QSQSQLPTATNNNNKQ) shows a compositional bias: polar residues. A disordered region spans residues 196-283 (QSQSQLPTAT…NNNNNNNNNE (88 aa)). Low complexity-rich tracts occupy residues 222 to 237 (TATA…TTTT) and 260 to 281 (NDNN…NNNN). One can recognise a Myb-like domain in the interval 311-360 (PWTVEDQKKLEDALTKYPPSRFSSVSRWQMVSKELGISPKAVALRYNQML). Positions 367–456 (KPSLQQQQQQ…TTVTPNMTTP (90 aa)) are disordered. 2 stretches are compositionally biased toward low complexity: residues 371–392 (QQQQ…TTTT) and 414–425 (SSFSSPSSSSKE). The span at 426–435 (SPNKKEKTTH) shows a compositional bias: basic and acidic residues. The span at 436 to 455 (DTTTTTNTATTTTVTPNMTT) shows a compositional bias: low complexity.

This Dictyostelium discoideum (Social amoeba) protein is Myb-like protein Y (mybY).